The following is a 316-amino-acid chain: Glutathione synthetase (316 aa).

The region spanning 124–310 (EKLFTAWFPE…ITGKLMDAIE (187 aa)) is the ATP-grasp domain. 150 to 207 (FREEHGDVILKPLDGMGGASIFRVKENDPNVSVIIETLTNHGQNYAMAQTFVPDISNG) contacts ATP. Positions 281 and 283 each coordinate Mg(2+).

It belongs to the prokaryotic GSH synthase family. Mg(2+) is required as a cofactor. Requires Mn(2+) as cofactor.

The catalysed reaction is gamma-L-glutamyl-L-cysteine + glycine + ATP = glutathione + ADP + phosphate + H(+). It participates in sulfur metabolism; glutathione biosynthesis; glutathione from L-cysteine and L-glutamate: step 2/2. This chain is Glutathione synthetase, found in Vibrio parahaemolyticus serotype O3:K6 (strain RIMD 2210633).